The chain runs to 231 residues: Platelet-activating factor acetylhydrolase IB subunit alpha1 (231 aa).

An N-acetylserine modification is found at serine 2. Serine 2 bears the Phosphoserine mark. Residues serine 47, aspartate 192, and histidine 195 contribute to the active site.

Belongs to the 'GDSL' lipolytic enzyme family. Platelet-activating factor acetylhydrolase IB beta/gamma subunits subfamily. In terms of assembly, forms a catalytic dimer which is either homodimer (alpha1/alpha1 homodimer) or heterodimer with PAFAH1B2 (alpha1/alpha2 heterodimer). Component of the cytosolic (PAF-AH (I)) heterotetrameric enzyme, which is composed of PAFAH1B1 (beta), PAFAH1B2 (alpha2) and PAFAH1B3 (alpha1) subunits. The catalytic activity of the enzyme resides in the alpha1 (PAFAH1B3) and alpha2 (PAFAH1B2) subunits, whereas the beta subunit (PAFAH1B1) has regulatory activity. Trimer formation is not essential for the catalytic activity. Interacts with VLDLR; this interaction may modulate the Reelin pathway.

Its subcellular location is the cytoplasm. It catalyses the reaction a 1-O-alkyl-2-acetyl-sn-glycero-3-phosphocholine + H2O = a 1-O-alkyl-sn-glycero-3-phosphocholine + acetate + H(+). The catalysed reaction is 1-O-hexadecyl-2-acetyl-sn-glycero-3-phosphocholine + H2O = 1-O-hexadecyl-sn-glycero-3-phosphocholine + acetate + H(+). It carries out the reaction 1-O-hexadecyl-2-acetyl-sn-glycero-3-phosphate + H2O = 1-O-hexadecyl-sn-glycero-3-phosphate + acetate + H(+). Its activity is regulated as follows. Beta subunit (PAFAH1B1) inhibits the acetylhydrolase activity of the alpha1/alpha1 catalytic homodimer. In terms of biological role, alpha1 catalytic subunit of the cytosolic type I platelet-activating factor (PAF) acetylhydrolase (PAF-AH (I)) heterotetrameric enzyme that catalyzes the hydrolyze of the acetyl group at the sn-2 position of PAF and its analogs and modulates the action of PAF. The activity and substrate specificity of PAF-AH (I) are affected by its subunit composition. Both alpha1/alpha1 homodimer (PAFAH1B3/PAFAH1B3 homodimer) and alpha1/alpha2 heterodimer(PAFAH1B3/PAFAH1B2 heterodimer) hydrolyze 1-O-alkyl-2-acetyl-sn-glycero-3-phosphoric acid (AAGPA) more efficiently than PAF, but they have little hydrolytic activity towards 1-O-alkyl-2-acetyl-sn-glycero-3-phosphorylethanolamine (AAGPE). Plays an important role during the development of brain. The sequence is that of Platelet-activating factor acetylhydrolase IB subunit alpha1 from Pongo abelii (Sumatran orangutan).